The following is a 326-amino-acid chain: tRNA-modifying protein YgfZ (326 aa).

Positions 27 and 189 each coordinate folate.

This sequence belongs to the tRNA-modifying YgfZ family.

The protein resides in the cytoplasm. Folate-binding protein involved in regulating the level of ATP-DnaA and in the modification of some tRNAs. It is probably a key factor in regulatory networks that act via tRNA modification, such as initiation of chromosomal replication. This is tRNA-modifying protein YgfZ from Shigella boydii serotype 18 (strain CDC 3083-94 / BS512).